The primary structure comprises 1445 residues: DNA-directed RNA polymerase subunit beta'' (1445 aa).

Zn(2+) is bound by residues C220, C293, C300, and C303.

It belongs to the RNA polymerase beta' chain family. RpoC2 subfamily. In plastids the minimal PEP RNA polymerase catalytic core is composed of four subunits: alpha, beta, beta', and beta''. When a (nuclear-encoded) sigma factor is associated with the core the holoenzyme is formed, which can initiate transcription. The cofactor is Zn(2+).

It is found in the plastid. The protein resides in the chloroplast. The catalysed reaction is RNA(n) + a ribonucleoside 5'-triphosphate = RNA(n+1) + diphosphate. Its function is as follows. DNA-dependent RNA polymerase catalyzes the transcription of DNA into RNA using the four ribonucleoside triphosphates as substrates. The protein is DNA-directed RNA polymerase subunit beta'' of Anthoceros angustus (Hornwort).